A 145-amino-acid polypeptide reads, in one-letter code: 3-hydroxyacyl-[acyl-carrier-protein] dehydratase FabZ (145 aa).

His-48 is an active-site residue.

The protein belongs to the thioester dehydratase family. FabZ subfamily.

It localises to the cytoplasm. The enzyme catalyses a (3R)-hydroxyacyl-[ACP] = a (2E)-enoyl-[ACP] + H2O. In terms of biological role, involved in unsaturated fatty acids biosynthesis. Catalyzes the dehydration of short chain beta-hydroxyacyl-ACPs and long chain saturated and unsaturated beta-hydroxyacyl-ACPs. This is 3-hydroxyacyl-[acyl-carrier-protein] dehydratase FabZ from Campylobacter hominis (strain ATCC BAA-381 / DSM 21671 / CCUG 45161 / LMG 19568 / NCTC 13146 / CH001A).